A 510-amino-acid chain; its full sequence is Bifunctional pantoate ligase/cytidylate kinase (510 aa).

The interval 1-276 (MKKVIIRKTE…CGETRLIDHV (276 aa)) is pantoate--beta-alanine ligase. 29–36 (MGNLHNGH) contributes to the ATP binding site. His36 functions as the Proton donor in the catalytic mechanism. Residue Gln61 coordinates (R)-pantoate. Gln61 provides a ligand contact to beta-alanine. 150–153 (GEKD) contributes to the ATP binding site. Position 156 (Gln156) interacts with (R)-pantoate. Residue 187–190 (LSSR) coordinates ATP. Residues 277 to 510 (FLMKRSPIIA…DKIPKETQIR (234 aa)) form a cytidylate kinase region.

The protein in the N-terminal section; belongs to the pantothenate synthetase family. This sequence in the C-terminal section; belongs to the cytidylate kinase family. Type 1 subfamily.

It is found in the cytoplasm. The enzyme catalyses (R)-pantoate + beta-alanine + ATP = (R)-pantothenate + AMP + diphosphate + H(+). The catalysed reaction is CMP + ATP = CDP + ADP. It catalyses the reaction dCMP + ATP = dCDP + ADP. It participates in cofactor biosynthesis; (R)-pantothenate biosynthesis; (R)-pantothenate from (R)-pantoate and beta-alanine: step 1/1. Its function is as follows. Catalyzes the condensation of pantoate with beta-alanine in an ATP-dependent reaction via a pantoyl-adenylate intermediate. In terms of biological role, catalyzes the transfer of a phosphate group from ATP to either CMP or dCMP to form CDP or dCDP and ADP, respectively. The chain is Bifunctional pantoate ligase/cytidylate kinase from Prochlorococcus marinus (strain MIT 9312).